The sequence spans 371 residues: Aminomethyltransferase (371 aa).

This sequence belongs to the GcvT family. The glycine cleavage system is composed of four proteins: P, T, L and H.

It carries out the reaction N(6)-[(R)-S(8)-aminomethyldihydrolipoyl]-L-lysyl-[protein] + (6S)-5,6,7,8-tetrahydrofolate = N(6)-[(R)-dihydrolipoyl]-L-lysyl-[protein] + (6R)-5,10-methylene-5,6,7,8-tetrahydrofolate + NH4(+). Functionally, the glycine cleavage system catalyzes the degradation of glycine. The protein is Aminomethyltransferase of Oceanobacillus iheyensis (strain DSM 14371 / CIP 107618 / JCM 11309 / KCTC 3954 / HTE831).